Reading from the N-terminus, the 108-residue chain is Ig kappa chain V-V region HP 93G7 (108 aa).

Positions Asp1–Cys23 are framework-1. A disulfide bridge links Cys23 with Cys88. The interval Arg24–Asn34 is complementarity-determining-1. The interval Trp35 to Tyr49 is framework-2. The complementarity-determining-2 stretch occupies residues Tyr50–Ser56. The segment at Gly57–Cys88 is framework-3. A complementarity-determining-3 region spans residues Gln89–Thr97. The framework-4 stretch occupies residues Phe98 to Arg108.

The polypeptide is Ig kappa chain V-V region HP 93G7 (Mus musculus (Mouse)).